We begin with the raw amino-acid sequence, 416 residues long: Probable cysteine desulfurase (416 aa).

Lysine 236 is modified (N6-(pyridoxal phosphate)lysine). Residue cysteine 374 is the Cysteine persulfide intermediate of the active site.

It belongs to the class-V pyridoxal-phosphate-dependent aminotransferase family. Csd subfamily. The cofactor is pyridoxal 5'-phosphate.

It catalyses the reaction (sulfur carrier)-H + L-cysteine = (sulfur carrier)-SH + L-alanine. In terms of biological role, catalyzes the removal of elemental sulfur and selenium atoms from L-cysteine, L-cystine, L-selenocysteine, and L-selenocystine to produce L-alanine. This chain is Probable cysteine desulfurase (csd), found in Xylella fastidiosa (strain 9a5c).